We begin with the raw amino-acid sequence, 402 residues long: MGLAEGLAARMAPHLYIQEPLSAQQLKKLEEHKYSASGRSLVEPPMQVYWNWLVEKVPLWLAPNTITMVGLLLNVLSTLILVCYCPTATEGAPFWTYLLCAIGLFVYQSLDAIDGKQARRTNSSSPLGEMFDHGCDSISIVFVNLGTIAAVRLGTLPGWMFYCCFVGMFMFYCAQWQTYVCGTLKFGIIDVTELQISVTVMFLMTAVCGPELWDYEIPFTGLPMKTIPLLGIIGGTVYSCSNYFRVILSGGVGKNGSTVAGTSVLSPGLHIGLVLLLALMIYKKSTTNLFLQNPCLYTLAFGFVSAKITIKLVIAHMTKSEISLQDTAFIGPGLLFFNQYFNSFIDEYIVLWIAMVISFADLLRYCISVCLQIATHLRISVFRISSNQAAEQVQTQKQKLTD.

The Cytoplasmic portion of the chain corresponds to 1–62 (MGLAEGLAAR…LVEKVPLWLA (62 aa)). The helical transmembrane segment at 63–83 (PNTITMVGLLLNVLSTLILVC) threads the bilayer. Asparagine 64 contributes to the CDP-choline binding site. At 84-93 (YCPTATEGAP) the chain is on the lumenal side. Residues 94 to 118 (FWTYLLCAIGLFVYQSLDAIDGKQA) form a helical membrane-spanning segment. Aspartate 111 and aspartate 114 together coordinate Mg(2+). CDP-choline is bound at residue arginine 119. Residues 119–125 (RRTNSSS) are Cytoplasmic-facing. A helical transmembrane segment spans residues 126 to 150 (PLGEMFDHGCDSISIVFVNLGTIAA). Position 132 (aspartate 132) interacts with Mg(2+). Catalysis depends on histidine 133, which acts as the Proton acceptor. Residue aspartate 136 coordinates Mg(2+). Topologically, residues 151 to 160 (VRLGTLPGWM) are lumenal. Residues 161 to 179 (FYCCFVGMFMFYCAQWQTY) traverse the membrane as a helical segment. The Cytoplasmic portion of the chain corresponds to 180–190 (VCGTLKFGIID). A helical transmembrane segment spans residues 191–207 (VTELQISVTVMFLMTAV). The Lumenal portion of the chain corresponds to 208-222 (CGPELWDYEIPFTGL). A helical membrane pass occupies residues 223 to 248 (PMKTIPLLGIIGGTVYSCSNYFRVIL). Residues 249–265 (SGGVGKNGSTVAGTSVL) are Cytoplasmic-facing. The chain crosses the membrane as a helical span at residues 266–281 (SPGLHIGLVLLLALMI). Residues 282-293 (YKKSTTNLFLQN) are Lumenal-facing. Residues 294-316 (PCLYTLAFGFVSAKITIKLVIAH) form a helical membrane-spanning segment. The Cytoplasmic segment spans residues 317–329 (MTKSEISLQDTAF). The chain crosses the membrane as a helical span at residues 330 to 339 (IGPGLLFFNQ). Residues 340 to 346 (YFNSFID) lie on the Lumenal side of the membrane. A helical membrane pass occupies residues 347 to 376 (EYIVLWIAMVISFADLLRYCISVCLQIATH). At 377–402 (LRISVFRISSNQAAEQVQTQKQKLTD) the chain is on the cytoplasmic side.

Belongs to the CDP-alcohol phosphatidyltransferase class-I family. Homodimer. The cofactor is Mg(2+). It depends on Mn(2+) as a cofactor.

The protein localises to the golgi apparatus membrane. The enzyme catalyses CDP-choline + a 1,2-diacyl-sn-glycerol = a 1,2-diacyl-sn-glycero-3-phosphocholine + CMP + H(+). The catalysed reaction is 1,2-dioctanoyl-sn-glycerol + CDP-choline = 1,2-dioctanoyl-sn-glycero-3-phosphocholine + CMP + H(+). It carries out the reaction 1-octadecanoyl-2-(5Z,8Z,11Z,14Z-eicosatetraenoyl)-sn-glycerol + CDP-choline = 1-octadecanoyl-2-(5Z,8Z,11Z,14Z-eicosatetraenoyl)-sn-glycero-3-phosphocholine + CMP + H(+). It catalyses the reaction 1-hexadecanoyl-2-(9Z-octadecenoyl)-sn-glycerol + CDP-choline = 1-hexadecanoyl-2-(9Z-octadecenoyl)-sn-glycero-3-phosphocholine + CMP + H(+). The enzyme catalyses 1-hexadecanoyl-2-(4Z,7Z,10Z,13Z,16Z,19Z-docosahexaenoyl)-sn-glycerol + CDP-choline = 1-hexadecanoyl-2-(4Z,7Z,10Z,13Z,16Z,19Z-docosahexaenoyl)-sn-glycero-3-phosphocholine + CMP + H(+). The protein operates within phospholipid metabolism; phosphatidylcholine biosynthesis; phosphatidylcholine from phosphocholine: step 2/2. Catalyzes the final step of de novo phosphatidylcholine (PC) synthesis, i.e. the transfer of choline phosphate from CDP-choline to the free hydroxyl of a diacylglycerol (DAG), producing a PC. It thereby plays a central role in the formation and maintenance of vesicular membranes. Shows a high preference for CDP-choline over CDP-ethanolamine as substrate. This Xenopus laevis (African clawed frog) protein is Cholinephosphotransferase 1 (chpt1).